Reading from the N-terminus, the 662-residue chain is DNA ligase (662 aa).

Residues 32 to 36 (DAEYD), 81 to 82 (SL), and Glu112 each bind NAD(+). The active-site N6-AMP-lysine intermediate is Lys114. 4 residues coordinate NAD(+): Arg135, Glu170, Lys286, and Lys310. The Zn(2+) site is built by Cys402, Cys405, Cys420, and Cys425. One can recognise a BRCT domain in the interval 583-662 (PKGGPLTGST…AELHAMLRGE (80 aa)).

It belongs to the NAD-dependent DNA ligase family. LigA subfamily. The cofactor is Mg(2+). Mn(2+) serves as cofactor.

It catalyses the reaction NAD(+) + (deoxyribonucleotide)n-3'-hydroxyl + 5'-phospho-(deoxyribonucleotide)m = (deoxyribonucleotide)n+m + AMP + beta-nicotinamide D-nucleotide.. Functionally, DNA ligase that catalyzes the formation of phosphodiester linkages between 5'-phosphoryl and 3'-hydroxyl groups in double-stranded DNA using NAD as a coenzyme and as the energy source for the reaction. It is essential for DNA replication and repair of damaged DNA. The protein is DNA ligase of Solibacter usitatus (strain Ellin6076).